Consider the following 255-residue polypeptide: Malonyl-[acyl-carrier protein] O-methyltransferase (255 aa).

The protein belongs to the methyltransferase superfamily.

The catalysed reaction is malonyl-[ACP] + S-adenosyl-L-methionine = malonyl-[ACP] methyl ester + S-adenosyl-L-homocysteine. The protein operates within cofactor biosynthesis; biotin biosynthesis. Functionally, converts the free carboxyl group of a malonyl-thioester to its methyl ester by transfer of a methyl group from S-adenosyl-L-methionine (SAM). It allows to synthesize pimeloyl-ACP via the fatty acid synthetic pathway. The chain is Malonyl-[acyl-carrier protein] O-methyltransferase from Serratia marcescens.